The primary structure comprises 91 residues: DNA-directed RNA polymerase subunit omega (91 aa).

Belongs to the RNA polymerase subunit omega family. The RNAP catalytic core consists of 2 alpha, 1 beta, 1 beta' and 1 omega subunit. When a sigma factor is associated with the core the holoenzyme is formed, which can initiate transcription.

It carries out the reaction RNA(n) + a ribonucleoside 5'-triphosphate = RNA(n+1) + diphosphate. In terms of biological role, promotes RNA polymerase assembly. Latches the N- and C-terminal regions of the beta' subunit thereby facilitating its interaction with the beta and alpha subunits. The sequence is that of DNA-directed RNA polymerase subunit omega from Photorhabdus laumondii subsp. laumondii (strain DSM 15139 / CIP 105565 / TT01) (Photorhabdus luminescens subsp. laumondii).